We begin with the raw amino-acid sequence, 354 residues long: Methionine import ATP-binding protein MetN (354 aa).

Residues 8-250 (LDHIDITFRQ…PKEALTQEFI (243 aa)) enclose the ABC transporter domain. 42 to 49 (GYSGAGKS) contributes to the ATP binding site.

It belongs to the ABC transporter superfamily. Methionine importer (TC 3.A.1.24) family. In terms of assembly, the complex is composed of two ATP-binding proteins (MetN), two transmembrane proteins (MetI) and a solute-binding protein (MetQ).

It is found in the cell membrane. The enzyme catalyses L-methionine(out) + ATP + H2O = L-methionine(in) + ADP + phosphate + H(+). It carries out the reaction D-methionine(out) + ATP + H2O = D-methionine(in) + ADP + phosphate + H(+). Part of the ABC transporter complex MetNIQ involved in methionine import. Responsible for energy coupling to the transport system. The sequence is that of Methionine import ATP-binding protein MetN from Streptococcus pyogenes serotype M12 (strain MGAS2096).